The primary structure comprises 312 residues: Atrochrysone carboxyl ACP thioesterase AacuM (312 aa).

4 residues coordinate Zn(2+): His-103, His-105, Asp-107, and His-108. Asp-107 serves as the catalytic Proton donor/acceptor.

This sequence belongs to the metallo-beta-lactamase superfamily. Requires Zn(2+) as cofactor.

It carries out the reaction atrochrysone carboxyl-[ACP] + H2O = atrochrysone carboxylate + holo-[ACP] + H(+). It participates in secondary metabolite biosynthesis. Atrochrysone carboxyl ACP thioesterase; part of the gene cluster that mediates the biosynthesis of the tetrahydroxanthone dimer secalonic acid D. The pathway begins with the synthesis of atrochrysone thioester by the polyketide synthase AacuL. The atrochrysone carboxyl ACP thioesterase AacuM then breaks the thioester bond and releases the atrochrysone carboxylic acid from AacuL. Atrochrysone carboxylic acid is decarboxylated by the decarboxylase AacuI, and oxidized by the anthrone oxygenase AacuG to yield emodin. Emodin is then reduced to emodin hydroquinone by a yet unidentified oxidoreductase. A-ring reduction by the short chain dehydrogenase AacuN, dehydration by the scytalone dehydratase-like protein AacuK and probable spontaneous re-oxidation, results in overall deoxygenation to chrysophanol. Baeyer-Villiger oxidation by the Baeyer-Villiger monooxygenase (BVMO) AacuH then yields monodictyphenone. Monodictyphenone is transformed into compounds with the tetrahydroxanthone skeleton via methylesterification by the methyltransferase AacuQ, followed by the action of the flavin-dependent monooxygenase AacuC, the isomerase AacuP, and the short chain dehydrogenase/reductase AacuF or AacuD. AacuF and AacuD should accept the same compound as a substrate but perform the ketoreduction with a different stereoselectivity, thus yielding blennolides B and A, respectively. In the final step of the biosynthesis, the cytochrome P450 monooxygenase AacuE accepts blennolide B and/or blennolide A to conduct the dimerization reaction to furnish the tetrahydroxanthone dimers, secalonic acids D, B, and F. In Aspergillus aculeatus (strain ATCC 16872 / CBS 172.66 / WB 5094), this protein is Atrochrysone carboxyl ACP thioesterase AacuM.